Here is a 458-residue protein sequence, read N- to C-terminus: Sushi repeat-containing protein SRPX2 (458 aa).

Positions 1-18 (MEASITVLLFAFTKVASS) are cleaved as a signal peptide. 3 consecutive Sushi domains span residues 62 to 112 (ATCY…HCRR), 113 to 171 (IQCH…VCVD), and 255 to 314 (RRCP…TCTP). 4 cysteine pairs are disulfide-bonded: cysteine 64/cysteine 98, cysteine 84/cysteine 110, cysteine 115/cysteine 156, and cysteine 142/cysteine 169. Positions 170-254 (VDLDPPKIQC…SCKFIVKVQV (85 aa)) constitute an HYR domain. Intrachain disulfides connect cysteine 257–cysteine 299 and cysteine 285–cysteine 312.

As to quaternary structure, forms homooligomers.

It is found in the secreted. The protein resides in the cytoplasm. It localises to the cell surface. The protein localises to the synapse. Functionally, may play a role in angiogenesis, synapse formation, cellular migration and adhesion. The chain is Sushi repeat-containing protein SRPX2 (srpx2) from Xenopus laevis (African clawed frog).